A 258-amino-acid chain; its full sequence is MPKTLTEKLNAIKATGKGIFVPYIMAGDHEKGLDGLGETIHFLEDLGVSAIEVGIPFSDPVADGPVIEEAGLRSLAHGTSTQALVETLKTIETEIPLVIMTYFNPLFQYGVENFVKDLADTAVKGLIIPDLPHEHANFVEPFLADTDIALIPLVSLTTGIERQKELIEGAEGFVYAVAINGVTGKSGNYRADLDKHLAQLHQVADIPVLTGFGVSSQADLERFNAVSDGVIVGSKIVKALHQGEPIQDFIRQAVAYQK.

Active-site proton acceptor residues include Glu52 and Asp63.

The protein belongs to the TrpA family. As to quaternary structure, tetramer of two alpha and two beta chains.

The catalysed reaction is (1S,2R)-1-C-(indol-3-yl)glycerol 3-phosphate + L-serine = D-glyceraldehyde 3-phosphate + L-tryptophan + H2O. It functions in the pathway amino-acid biosynthesis; L-tryptophan biosynthesis; L-tryptophan from chorismate: step 5/5. The alpha subunit is responsible for the aldol cleavage of indoleglycerol phosphate to indole and glyceraldehyde 3-phosphate. The chain is Tryptophan synthase alpha chain from Streptococcus pneumoniae serotype 2 (strain D39 / NCTC 7466).